Reading from the N-terminus, the 262-residue chain is MLLVIDVGNTNTVLGVFNGNTLIQDWRIRTIRESTVDEFNLLAKALFVDKKIDLSTIKRTVISSVVPPINSILDTFCTRYLNQKPLWIDPASVKNLMPICYSNPAEVGADRIVNAVAAFERYKTSMIIIDFGTATTFDAISAKGEYLGGAITPGVMISAEALFQRASKLPRVEIFRRPQNVIGKNTIDSIKSGIIYGNGALVDGMVKRMSKEMGTTPKVIATGGLAVLIADASETIEIVDNALTLEGLRIIADQPVFSEGQR.

ATP is bound at residue 6–13; sequence DVGNTNTV. Substrate is bound by residues Y101 and 108–111; that span reads GADR. The active-site Proton acceptor is D110. Residue D130 coordinates K(+). T133 contacts ATP. T186 contacts substrate.

It belongs to the type III pantothenate kinase family. As to quaternary structure, homodimer. NH4(+) serves as cofactor. Requires K(+) as cofactor.

Its subcellular location is the cytoplasm. It carries out the reaction (R)-pantothenate + ATP = (R)-4'-phosphopantothenate + ADP + H(+). It functions in the pathway cofactor biosynthesis; coenzyme A biosynthesis; CoA from (R)-pantothenate: step 1/5. Its function is as follows. Catalyzes the phosphorylation of pantothenate (Pan), the first step in CoA biosynthesis. This Desulforapulum autotrophicum (strain ATCC 43914 / DSM 3382 / VKM B-1955 / HRM2) (Desulfobacterium autotrophicum) protein is Type III pantothenate kinase.